A 167-amino-acid chain; its full sequence is Small ribosomal subunit protein uS5 (167 aa).

The 64-residue stretch at 11 to 74 (LQEKLIAVNR…EKARRAMINV (64 aa)) folds into the S5 DRBM domain.

The protein belongs to the universal ribosomal protein uS5 family. As to quaternary structure, part of the 30S ribosomal subunit. Contacts proteins S4 and S8.

Its function is as follows. With S4 and S12 plays an important role in translational accuracy. Located at the back of the 30S subunit body where it stabilizes the conformation of the head with respect to the body. The polypeptide is Small ribosomal subunit protein uS5 (Yersinia pseudotuberculosis serotype O:1b (strain IP 31758)).